Consider the following 134-residue polypeptide: MAFLKKSLFLVLFLGVVSLSFCEEEKREEHEEEKRDEEDAESLGKRYGGLSPLRISKRVPPGFTPFRSPARSISGLTPIRLSKRVPPGFTPFRSPARRISEADPGFTPSFVVIKGLSPLRGKRRPPGFSPFRVD.

A signal peptide spans Met-1–Cys-22. 3 propeptides span residues Glu-23–Gly-44, Arg-71–Ser-82, and Ile-99–Gly-121. The segment covering Glu-24–Glu-33 has biased composition (basic and acidic residues). The interval Glu-24–Arg-71 is disordered. Pro-126 carries the post-translational modification 4-hydroxyproline; partial; in form [Hyp3]-bradykinin and [Hyp3]-bradykinin-Val,Asp.

It belongs to the frog skin active peptide (FSAP) family. Bradykinin-related peptide subfamily. As to expression, expressed by the skin glands. Expression levels in inguinal glands are much higher than in granular glands.

It is found in the secreted. In terms of biological role, may produce in vitro relaxation of rat arterial smooth muscle and constriction of intestinal smooth muscle. May target bradykinin receptors (BDKRB). In Physalaemus nattereri (Cuyaba dwarf frog), this protein is Bradykinin-related peptides.